The sequence spans 59 residues: Large ribosomal subunit protein uL30 (59 aa).

Belongs to the universal ribosomal protein uL30 family. As to quaternary structure, part of the 50S ribosomal subunit.

The chain is Large ribosomal subunit protein uL30 from Clostridium beijerinckii (strain ATCC 51743 / NCIMB 8052) (Clostridium acetobutylicum).